The sequence spans 251 residues: 5-oxoprolinase subunit A (251 aa).

It belongs to the LamB/PxpA family. Forms a complex composed of PxpA, PxpB and PxpC.

It catalyses the reaction 5-oxo-L-proline + ATP + 2 H2O = L-glutamate + ADP + phosphate + H(+). In terms of biological role, catalyzes the cleavage of 5-oxoproline to form L-glutamate coupled to the hydrolysis of ATP to ADP and inorganic phosphate. This Vibrio campbellii (strain ATCC BAA-1116) protein is 5-oxoprolinase subunit A.